Consider the following 277-residue polypeptide: Formamidopyrimidine-DNA glycosylase (277 aa).

Proline 2 acts as the Schiff-base intermediate with DNA in catalysis. Glutamate 3 acts as the Proton donor in catalysis. The active-site Proton donor; for beta-elimination activity is lysine 58. Residues histidine 95, arginine 113, and arginine 158 each contribute to the DNA site. The FPG-type zinc finger occupies 243–277 (GVYDRANQPCLRCGGVVRQIRQAGRSTYYCTGCQH). The active-site Proton donor; for delta-elimination activity is arginine 267.

Belongs to the FPG family. As to quaternary structure, monomer. Zn(2+) serves as cofactor.

The enzyme catalyses Hydrolysis of DNA containing ring-opened 7-methylguanine residues, releasing 2,6-diamino-4-hydroxy-5-(N-methyl)formamidopyrimidine.. The catalysed reaction is 2'-deoxyribonucleotide-(2'-deoxyribose 5'-phosphate)-2'-deoxyribonucleotide-DNA = a 3'-end 2'-deoxyribonucleotide-(2,3-dehydro-2,3-deoxyribose 5'-phosphate)-DNA + a 5'-end 5'-phospho-2'-deoxyribonucleoside-DNA + H(+). Functionally, involved in base excision repair of DNA damaged by oxidation or by mutagenic agents. Acts as a DNA glycosylase that recognizes and removes damaged bases. Has a preference for oxidized purines, such as 7,8-dihydro-8-oxoguanine (8-oxoG). Has AP (apurinic/apyrimidinic) lyase activity and introduces nicks in the DNA strand. Cleaves the DNA backbone by beta-delta elimination to generate a single-strand break at the site of the removed base with both 3'- and 5'-phosphates. In Dechloromonas aromatica (strain RCB), this protein is Formamidopyrimidine-DNA glycosylase.